Consider the following 132-residue polypeptide: Agouti-related protein (132 aa).

The N-terminal stretch at 1 to 20 (MLTAAVLSCALLLALPATRG) is a signal peptide. Residues 21 to 82 (AQMGLAPMEG…VLDLQDREPR (62 aa)) constitute a propeptide that is removed on maturation. Intrachain disulfides connect Cys87–Cys102, Cys94–Cys108, Cys101–Cys119, Cys105–Cys129, and Cys110–Cys117. In terms of domain architecture, Agouti spans 87-129 (CVRLHESCLGQQVPCCDPCATCYCRFFNAFCYCRKLGTAMNPC). The interaction with melanocortin receptors stretch occupies residues 111–113 (RFF).

In terms of assembly, interacts with melanocortin receptors MC3R, MC4R and MC5R. In terms of tissue distribution, expressed primarily in the adrenal gland, subthalamic nucleus, and hypothalamus, with a lower level of expression occurring in testis, lung, and kidney.

It localises to the secreted. Its subcellular location is the golgi apparatus lumen. Functionally, plays a role in weight homeostasis. Involved in the control of feeding behavior through the central melanocortin system. Acts as alpha melanocyte-stimulating hormone antagonist by inhibiting cAMP production mediated by stimulation of melanocortin receptors within the hypothalamus and adrenal gland. Has very low activity with MC5R. Is an inverse agonist for MC3R and MC4R being able to suppress their constitutive activity. It promotes MC3R and MC4R endocytosis in an arrestin-dependent manner. The polypeptide is Agouti-related protein (AGRP) (Homo sapiens (Human)).